Consider the following 588-residue polypeptide: Arginine--tRNA ligase (588 aa).

Residues 124–134 (PNVAKPMHVGH) carry the 'HIGH' region motif.

This sequence belongs to the class-I aminoacyl-tRNA synthetase family. In terms of assembly, monomer.

It is found in the cytoplasm. The catalysed reaction is tRNA(Arg) + L-arginine + ATP = L-arginyl-tRNA(Arg) + AMP + diphosphate. The protein is Arginine--tRNA ligase of Maricaulis maris (strain MCS10) (Caulobacter maris).